Consider the following 122-residue polypeptide: Large ribosomal subunit protein bL19 (122 aa).

The protein belongs to the bacterial ribosomal protein bL19 family.

Functionally, this protein is located at the 30S-50S ribosomal subunit interface and may play a role in the structure and function of the aminoacyl-tRNA binding site. The chain is Large ribosomal subunit protein bL19 from Acinetobacter baumannii (strain AB307-0294).